The following is a 494-amino-acid chain: Cysteine--tRNA ligase (494 aa).

Cys-29 provides a ligand contact to Zn(2+). A 'HIGH' region motif is present at residues 31–41 (VTVYDYCHLGH). Zn(2+) is bound by residues Cys-216, His-241, and Glu-245. Residues 273–277 (KMSKS) carry the 'KMSKS' region motif. Lys-276 contributes to the ATP binding site.

This sequence belongs to the class-I aminoacyl-tRNA synthetase family. Monomer. Requires Zn(2+) as cofactor.

The protein resides in the cytoplasm. The enzyme catalyses tRNA(Cys) + L-cysteine + ATP = L-cysteinyl-tRNA(Cys) + AMP + diphosphate. This Cyanothece sp. (strain PCC 7425 / ATCC 29141) protein is Cysteine--tRNA ligase.